We begin with the raw amino-acid sequence, 468 residues long: Probable protein phosphatase 2C 52 (468 aa).

Residues Ser67–Leu372 enclose the PPM-type phosphatase domain. Mn(2+) contacts are provided by Asp102, Gly103, Asp317, and Asp363. Residues Arg413–Glu429 show a composition bias toward polar residues. Residues Arg413–Asn442 are disordered.

It belongs to the PP2C family. The cofactor is Mg(2+). Requires Mn(2+) as cofactor.

It carries out the reaction O-phospho-L-seryl-[protein] + H2O = L-seryl-[protein] + phosphate. The enzyme catalyses O-phospho-L-threonyl-[protein] + H2O = L-threonyl-[protein] + phosphate. In Arabidopsis thaliana (Mouse-ear cress), this protein is Probable protein phosphatase 2C 52.